A 259-amino-acid chain; its full sequence is MTDLKASSLRALKLMDLTTLNDDDTNEKVIALCHQAKTPVGNTAAICIYPRFIPIARKTLKEQGTPDIRIATVTNFPHGNDDIDIALAETRAAIAYGADEVDVVFPYRALIAGNEQVGFDLVKACKDACAAANVLLKVIIETGELKEEALIRKASEISIKAGADFIKTSTGKVPVNATPESARIMMEVIRDMGVSKTVGFKPAGGVRTAEDAQKFLAIADELFGADWADSRHYRFGASSLLASLLKALGHGDGKSASSY.

Aspartate 102 functions as the Proton donor/acceptor in the catalytic mechanism. The active-site Schiff-base intermediate with acetaldehyde is lysine 167. Catalysis depends on lysine 201, which acts as the Proton donor/acceptor.

It belongs to the DeoC/FbaB aldolase family. DeoC type 2 subfamily.

The protein resides in the cytoplasm. It carries out the reaction 2-deoxy-D-ribose 5-phosphate = D-glyceraldehyde 3-phosphate + acetaldehyde. Its pathway is carbohydrate degradation; 2-deoxy-D-ribose 1-phosphate degradation; D-glyceraldehyde 3-phosphate and acetaldehyde from 2-deoxy-alpha-D-ribose 1-phosphate: step 2/2. Functionally, catalyzes a reversible aldol reaction between acetaldehyde and D-glyceraldehyde 3-phosphate to generate 2-deoxy-D-ribose 5-phosphate. In Salmonella dublin (strain CT_02021853), this protein is Deoxyribose-phosphate aldolase.